Here is a 498-residue protein sequence, read N- to C-terminus: Membrane-bound lytic murein transglycosylase F (498 aa).

Positions 1-29 (MFFKPDFRPRCAKWLIATGLFLMLGACVE) are cleaved as a signal peptide. The segment at 30–267 (KPTTLERVKE…RLKDRYYGHV (238 aa)) is non-LT domain. Positions 268–498 (DVLGYVGAYT…SSSSTDESPL (231 aa)) are LT domain. The active site involves Glu-314. Residues 464-498 (VADGNLHVPGVDKTQPPVPPASPVPSSSSTDESPL) form a disordered region.

It in the N-terminal section; belongs to the bacterial solute-binding protein 3 family. The protein in the C-terminal section; belongs to the transglycosylase Slt family.

The protein resides in the cell outer membrane. The enzyme catalyses Exolytic cleavage of the (1-&gt;4)-beta-glycosidic linkage between N-acetylmuramic acid (MurNAc) and N-acetylglucosamine (GlcNAc) residues in peptidoglycan, from either the reducing or the non-reducing ends of the peptidoglycan chains, with concomitant formation of a 1,6-anhydrobond in the MurNAc residue.. Murein-degrading enzyme that degrades murein glycan strands and insoluble, high-molecular weight murein sacculi, with the concomitant formation of a 1,6-anhydromuramoyl product. Lytic transglycosylases (LTs) play an integral role in the metabolism of the peptidoglycan (PG) sacculus. Their lytic action creates space within the PG sacculus to allow for its expansion as well as for the insertion of various structures such as secretion systems and flagella. In Pseudomonas syringae pv. syringae (strain B728a), this protein is Membrane-bound lytic murein transglycosylase F.